We begin with the raw amino-acid sequence, 316 residues long: DMOA farnesyltransferase nvfB (316 aa).

9 consecutive transmembrane segments (helical) span residues 47 to 67 (VVGV…TILL), 71 to 91 (LILV…NDVI), 115 to 135 (WNAV…LSFL), 139 to 159 (CAIE…GKRF), 162 to 182 (FPQL…HSLG), 191 to 211 (PTFF…VVYS), 234 to 254 (IELL…AAGY), 258 to 278 (LGIP…LYFL), and 294 to 314 (KLAC…EYYL).

The protein belongs to the UbiA prenyltransferase family.

The protein resides in the membrane. The enzyme catalyses 3,5-dimethylorsellinate + (2E,6E)-farnesyl diphosphate = (3R)-3-farnesyl-6-hydroxy-2,3,5-trimethyl-4-oxocyclohexa-1,5-diene-1-carboxylate + diphosphate + H(+). It participates in secondary metabolite biosynthesis; terpenoid biosynthesis. In terms of biological role, DMOA farnesyltransferase; part of the gene cluster that mediates the biosynthesis of novofumigatonin, a heavily oxygenated meroterpenoid containing a unique orthoester moiety. The first step of the pathway is the synthesis of 3,5-dimethylorsellinic acid (DMOA) by the polyketide synthase nvfA via condensation of one acetyl-CoA starter unit with 3 malonyl-CoA units and 2 methylations. DMOA is then converted to farnesyl-DMOA by the farnesyltransferase nvfB. Epoxydation by FAD-dependent monooxygenase nvfK, followed by a protonation-initiated cyclization catalyzed by the terpene cyclase nvfL leads to the production of asnavolin H. The short chain dehydrogenase nvfC then as a 3-OH dehydrogenase of asnovolin H to yield chemesin D. There are two branches to synthesize asnovolin A from chemesin D. In one branch, chemesin D undergoes Baeyer-Villiger oxidation by nvfH, methylation by nvfJ, and enoyl reduction by the nvfM D enoylreductase that reduces the double bond between C-5'and C-6', to form respectively asnovolin I, asnovolin K, and asnovolin A. In the other branch, the methylation precedes the Baeyer-Villiger oxidation and the enoyl reduction to yield asnovolin A via the asnovolin J intermediate. Asnovolin A is further converted to fumigatonoid A by the Fe(II)/2-oxoglutarate-dependent dioxygenase nvfI that catalyzes an endoperoxidation reaction. The alpha/beta hydrolase nvfD then acts as an epimerase that converts fumigatonoid A to its C-5' epimer, which then undergoes spontaneous or nvfD-catalyzed lactonization. The following step utilizes the ketoreductase nvfG to produce fumigatonoid B. The dioxygenase nvfE further converts fumigatonoid B into fumigatonoid C. Finally the Fe(II)/2-oxoglutarate-dependent dioxygenase nvfF catalyzes two rounds of oxidation to transform fumigatonoid C into the end product, novofumigatonin A. The protein is DMOA farnesyltransferase nvfB of Aspergillus novofumigatus (strain IBT 16806).